A 382-amino-acid chain; its full sequence is Galactokinase (382 aa).

34–37 contacts substrate; that stretch reads EHTD. ATP is bound at residue 124–130; it reads GAGLSSS. S130 and E162 together coordinate Mg(2+). Residue D174 is the Proton acceptor of the active site. Y223 is a substrate binding site.

It belongs to the GHMP kinase family. GalK subfamily.

Its subcellular location is the cytoplasm. It catalyses the reaction alpha-D-galactose + ATP = alpha-D-galactose 1-phosphate + ADP + H(+). The protein operates within carbohydrate metabolism; galactose metabolism. In terms of biological role, catalyzes the transfer of the gamma-phosphate of ATP to D-galactose to form alpha-D-galactose-1-phosphate (Gal-1-P). The polypeptide is Galactokinase (Salmonella newport (strain SL254)).